The sequence spans 372 residues: 3-galactosyl-N-acetylglucosaminide 4-alpha-L-fucosyltransferase FUT3 (372 aa).

Topologically, residues 1-15 are cytoplasmic; sequence MDPLGAAKPQWPWRR. Residues 16-34 form a helical; Signal-anchor for type II membrane protein membrane-spanning segment; that stretch reads CLAALLFQLLVAVCFFSYL. The Lumenal portion of the chain corresponds to 35 to 372; sequence RVSRDDATGS…TMRSIAAWFT (338 aa). A disordered region spans residues 40 to 69; sequence DATGSPRPGLMAVEPVTGAPSGSSRQDTTP. 2 N-linked (GlcNAc...) asparagine glycosylation sites follow: N165 and N196.

Belongs to the glycosyltransferase 10 family. Glycosylated.

The protein resides in the golgi apparatus. It is found in the golgi stack membrane. It catalyses the reaction a beta-D-galactosyl-(1-&gt;3)-N-acetyl-beta-D-glucosaminyl derivative + GDP-beta-L-fucose = a beta-D-galactosyl-(1-&gt;3)-[alpha-L-fucosyl-(1-&gt;4)]-N-acetyl-beta-D-glucosaminyl derivative + GDP + H(+). The catalysed reaction is an N-acetyl-alpha-neuraminyl-(2-&gt;3)-beta-D-galactosyl-(1-&gt;4)-N-acetyl-beta-D-glucosaminyl derivative + GDP-beta-L-fucose = an alpha-Neu5Ac-(2-&gt;3)-beta-D-Gal-(1-&gt;4)-[alpha-L-Fuc-(1-&gt;3)]-beta-D-GlcNAc derivative + GDP + H(+). It carries out the reaction a beta-D-galactosyl-(1-&gt;4)-N-acetyl-beta-D-glucosaminyl derivative + GDP-beta-L-fucose = a beta-D-galactosyl-(1-&gt;4)-[alpha-L-fucosyl-(1-&gt;3)]-N-acetyl-beta-D-glucosaminyl derivative + GDP + H(+). The enzyme catalyses an alpha-Neu5Ac-(2-&gt;3)-beta-D-Gal-(1-&gt;4)-beta-D-GlcNAc-(1-&gt;3)-beta-D-Gal-(1-&gt;4)-[alpha-L-Fuc-(1-&gt;3)]-beta-D-GlcNAc derivative + GDP-beta-L-fucose = an alpha-Neu5Ac-(2-&gt;3)-beta-D-Gal-(1-&gt;4)-[alpha-L-Fuc-(1-&gt;3)]-beta-D-GlcNAc-(1-&gt;3)-beta-D-Gal-(1-&gt;4)-[alpha-L-Fuc-(1-&gt;3)]-beta-D-GlcNAc derivative + GDP + H(+). It catalyses the reaction Lc4Cer + GDP-beta-L-fucose = a lactoside III(4)-a-Fuc-Lc4Cer + GDP + H(+). The catalysed reaction is a beta-D-Gal-(1-&gt;3)-beta-D-GlcNAc-(1-&gt;3)-beta-D-Gal-(1-&gt;4)-beta-D-Glc-(1&lt;-&gt;1')-Cer(d18:1(4E)) + GDP-beta-L-fucose = a III(4)-a-Fuc-Lc4Cer(d18:1(4E)) + GDP + H(+). It carries out the reaction N-acetyl-alpha-neuraminosyl-(2-&gt;3)-beta-D-galactosyl-(1-&gt;3)-[N-acetyl-alpha-neuraminosyl-(2-&gt;6)]-N-acetyl-beta-D-glucosaminyl-(1-&gt;3)-beta-D-galactosyl-(1-&gt;4)-beta-D-glucosyl-(1&lt;-&gt;1')-N-acyl-sphing-4-enine + GDP-beta-L-fucose = N-acetyl-alpha-neuraminosyl-(2-&gt;3)-beta-D-galactosyl-(1-&gt;3)-alpha-L-fucosyl-(1-&gt;4)-[N-acetyl-alpha-neuraminosyl-(2-&gt;6)-N-acetyl-beta-D-glucosaminyl-(1-&gt;3)]-beta-D-galactosyl-(1-&gt;4)-beta-D-glucosyl-(1&lt;-&gt;1')-N-acyl-sphing-4-enine + GDP + H(+). The enzyme catalyses N-acetyl-alpha-neuraminosyl-(2-&gt;3)-beta-D-galactosyl-(1-&gt;3)-N-acetyl-beta-D-glucosaminyl-(1-&gt;3)-beta-D-galactosyl-(1-&gt;4)-beta-D-glucosyl-(1&lt;-&gt;1')-N-acyl-sphing-4-enine + GDP-beta-L-fucose = N-acetyl-alpha-neuraminosyl-(2-&gt;3)-beta-D-galactosyl-(1-&gt;3)-alpha-L-fucosyl-(1-&gt;4)-[N-acetyl-beta-D-glucosaminyl-(1-&gt;3)]-beta-D-galactosyl-(1-&gt;4)-beta-D-glucosyl-(1&lt;-&gt;1')-N-acyl-sphing-4-enine + GDP + H(+). It catalyses the reaction beta-D-galactosyl-(1-&gt;3)-N-acetyl-D-glucosamine + GDP-beta-L-fucose = beta-D-galactosyl-(1-&gt;3)-[alpha-L-fucosyl-(1-&gt;4)]-N-acetyl-D-glucosamine + GDP + H(+). The catalysed reaction is alpha-L-Fuc-(1-&gt;2)-beta-D-Gal-(1-&gt;3)-D-GlcNAc + GDP-beta-L-fucose = alpha-L-Fuc-(1-&gt;2)-beta-D-Gal-(1-&gt;3)-[alpha-L-Fuc-(1-&gt;4)]-D-GlcNAc + GDP + H(+). It carries out the reaction alpha-L-Fuc-(1-&gt;2)-beta-D-Gal-(1-&gt;4)-D-GlcNAc + GDP-beta-L-fucose = alpha-L-Fuc-(1-&gt;2)-beta-D-Gal-(1-&gt;4)-[alpha-L-Fuc-(1-&gt;3)]-D-GlcNAc + GDP + H(+). The enzyme catalyses beta-D-galactosyl-(1-&gt;4)-N-acetyl-D-glucosamine + GDP-beta-L-fucose = beta-D-galactosyl-(1-&gt;4)-[alpha-L-fucosyl-(1-&gt;3)]-N-acetyl-D-glucosamine + GDP + H(+). It catalyses the reaction lactose + GDP-beta-L-fucose = beta-D-galactosyl-(1-&gt;4)-[alpha-L-fucosyl-(1-&gt;3)]-D-glucose + GDP + H(+). The catalysed reaction is an alpha-Neu5Ac-(2-&gt;3)-beta-D-Gal-(1-&gt;3)-D-GlcNAc derivative + GDP-beta-L-fucose = an alpha-Neu5Ac-(2-&gt;3)-beta-D-Gal-(1-&gt;3)-[alpha-L-Fuc-(1-&gt;4)]-beta-D-GlcNAc derivative + GDP + H(+). The protein operates within protein modification; protein glycosylation. Functionally, catalyzes the transfer of L-fucose, from a guanosine diphosphate-beta-L-fucose, to both the subterminal N-acetyl glucosamine (GlcNAc) of type 1 chain (beta-D-Gal-(1-&gt;3)-beta-D-GlcNAc) glycolipids and oligosaccharides via an alpha(1,4) linkage, and the subterminal glucose (Glc) or GlcNAc of type 2 chain (beta-D-Gal-(1-&gt;4)-beta-D-GlcNAc) oligosaccharides via an alpha(1,3) linkage, independently of the presence of terminal alpha-L-fucosyl-(1,2) moieties on the terminal galactose of these acceptors and participates in the blood groups Lewis determination and expression of Lewis a (Le(a)), lewis b (Le(b)), Lewis x/SSEA-1 (Le(x)) and lewis y (Le(y)) antigens. Also catalyzes the transfer of L-fucose to subterminal GlcNAc of sialyl- and disialyl-lactotetraosylceramide to produce sialyl Lewis a (sLe(a)) and disialyl Lewis a via an alpha(1,4) linkage and therefore may regulate cell surface sialyl Lewis a expression and consequently regulates adhesive properties to E-selectin, cell proliferation and migration. Catalyzes the transfer of an L-fucose to 3'-sialyl-N-acetyllactosamine by an alpha(1,3) linkage, which allows the formation of sialyl-Lewis x structure and therefore may regulate the sialyl-Lewis x surface antigen expression and consequently adhesive properties to E-selectin. Prefers type 1 chain over type 2 acceptors. Type 1 tetrasaccharide is a better acceptor than type 1 disaccharide suggesting that a beta anomeric configuration of GlcNAc in the substrate is preferred. Lewis-positive (Le(+)) individuals have an active enzyme while Lewis-negative (Le(-)) individuals have an inactive enzyme. The sequence is that of 3-galactosyl-N-acetylglucosaminide 4-alpha-L-fucosyltransferase FUT3 from Pan troglodytes (Chimpanzee).